The primary structure comprises 131 residues: Agouti-signaling protein (131 aa).

Residues 1–22 (MDVTRLLLATLVGFLCFLTVHS) form the signal peptide. N-linked (GlcNAc...) asparagine glycosylation occurs at Asn-39. Residues 58–96 (KSKKISRKEAEKRKRSSKKKASIKKVARPPPPSPCVATR) form a disordered region. The segment covering 70–84 (RKRSSKKKASIKKVA) has biased composition (basic residues). 5 disulfides stabilise this stretch: Cys-92/Cys-107, Cys-99/Cys-113, Cys-106/Cys-124, Cys-110/Cys-131, and Cys-115/Cys-122. The 40-residue stretch at 92 to 131 (CVATRDSCKPPAPACCNPCASCQCRFFGSACTCRVLNPNC) folds into the Agouti domain.

Its subcellular location is the secreted. In terms of biological role, involved in the regulation of melanogenesis. The binding of ASP to MC1R precludes alpha-MSH initiated signaling and thus blocks production of cAMP, leading to a down-regulation of eumelanogenesis (brown/black pigment) and thus increasing synthesis of pheomelanin (yellow/red pigment). This is Agouti-signaling protein from Rattus norvegicus (Rat).